We begin with the raw amino-acid sequence, 479 residues long: FAD-dependent monooxygenase ausM (479 aa).

The FAD site is built by Glu-40, Gly-54, and Arg-113. Residue Tyr-224 is part of the active site. N-linked (GlcNAc...) asparagine glycosylation is present at Asn-289. Positions 316 and 329 each coordinate FAD. Residues 449–469 (TLPWLVISLPVLASMLCYLVY) form a helical membrane-spanning segment.

It belongs to the paxM FAD-dependent monooxygenase family. The cofactor is FAD.

Its subcellular location is the membrane. The protein operates within secondary metabolite biosynthesis; terpenoid biosynthesis. FAD-dependent monooxygenase; part of the gene cluster B that mediates the biosynthesis of austinol and dehydroaustinol, two fungal meroterpenoids. The first step of the pathway is the synthesis of 3,5-dimethylorsellinic acid by the polyketide synthase ausA. 3,5-dimethylorsellinic acid is then prenylated by the polyprenyl transferase ausN. Further epoxidation by the FAD-dependent monooxygenase ausM and cyclization by the probable terpene cyclase ausL lead to the formation of protoaustinoid A. Protoaustinoid A is then oxidized to spiro-lactone preaustinoid A3 by the combined action of the FAD-binding monooxygenases ausB and ausC, and the dioxygenase ausE. Acid-catalyzed keto-rearrangement and ring contraction of the tetraketide portion of preaustinoid A3 by ausJ lead to the formation of preaustinoid A4. The aldo-keto reductase ausK, with the help of ausH, is involved in the next step by transforming preaustinoid A4 into isoaustinone which is in turn hydroxylated by the P450 monooxygenase ausI to form austinolide. Finally, the cytochrome P450 monooxygenase ausG modifies austinolide to austinol. Austinol can be further modified to dehydroaustinol which forms a diffusible complex with diorcinol that initiates conidiation. Due to genetic rearrangements of the clusters and the subsequent loss of some enzymes, the end products of the Emericella nidulans austinoid biosynthesis clusters are austinol and dehydroaustinol, even if additional enzymes, such as the O-acetyltransferase ausQ and the cytochrome P450 monooxygenase ausR are still functional. This is FAD-dependent monooxygenase ausM from Emericella nidulans (strain FGSC A4 / ATCC 38163 / CBS 112.46 / NRRL 194 / M139) (Aspergillus nidulans).